We begin with the raw amino-acid sequence, 224 residues long: 7-cyano-7-deazaguanine synthase (224 aa).

11 to 21 (FSGGQDSTTCL) contacts ATP. Zn(2+) contacts are provided by cysteine 190, cysteine 199, cysteine 202, and cysteine 205.

It belongs to the QueC family. Zn(2+) serves as cofactor.

It catalyses the reaction 7-carboxy-7-deazaguanine + NH4(+) + ATP = 7-cyano-7-deazaguanine + ADP + phosphate + H2O + H(+). It participates in purine metabolism; 7-cyano-7-deazaguanine biosynthesis. Catalyzes the ATP-dependent conversion of 7-carboxy-7-deazaguanine (CDG) to 7-cyano-7-deazaguanine (preQ(0)). This is 7-cyano-7-deazaguanine synthase from Parabacteroides distasonis (strain ATCC 8503 / DSM 20701 / CIP 104284 / JCM 5825 / NCTC 11152).